A 201-amino-acid chain; its full sequence is Imidazole glycerol phosphate synthase subunit HisH (201 aa).

Positions 1-201 (MVFIADYGAG…LQVLRNFAEC (201 aa)) constitute a Glutamine amidotransferase type-1 domain. Residue Cys79 is the Nucleophile of the active site. Residues His183 and Glu185 contribute to the active site.

As to quaternary structure, heterodimer of HisH and HisF.

Its subcellular location is the cytoplasm. It catalyses the reaction 5-[(5-phospho-1-deoxy-D-ribulos-1-ylimino)methylamino]-1-(5-phospho-beta-D-ribosyl)imidazole-4-carboxamide + L-glutamine = D-erythro-1-(imidazol-4-yl)glycerol 3-phosphate + 5-amino-1-(5-phospho-beta-D-ribosyl)imidazole-4-carboxamide + L-glutamate + H(+). The catalysed reaction is L-glutamine + H2O = L-glutamate + NH4(+). It participates in amino-acid biosynthesis; L-histidine biosynthesis; L-histidine from 5-phospho-alpha-D-ribose 1-diphosphate: step 5/9. Functionally, IGPS catalyzes the conversion of PRFAR and glutamine to IGP, AICAR and glutamate. The HisH subunit catalyzes the hydrolysis of glutamine to glutamate and ammonia as part of the synthesis of IGP and AICAR. The resulting ammonia molecule is channeled to the active site of HisF. This chain is Imidazole glycerol phosphate synthase subunit HisH, found in Chlorobium luteolum (strain DSM 273 / BCRC 81028 / 2530) (Pelodictyon luteolum).